Here is a 219-residue protein sequence, read N- to C-terminus: 7-methyl-GTP pyrophosphatase (219 aa).

Asp89 functions as the Proton acceptor in the catalytic mechanism.

The protein belongs to the Maf family. YceF subfamily. The cofactor is a divalent metal cation.

The protein resides in the cytoplasm. The catalysed reaction is N(7)-methyl-GTP + H2O = N(7)-methyl-GMP + diphosphate + H(+). In terms of biological role, nucleoside triphosphate pyrophosphatase that hydrolyzes 7-methyl-GTP (m(7)GTP). May have a dual role in cell division arrest and in preventing the incorporation of modified nucleotides into cellular nucleic acids. This is 7-methyl-GTP pyrophosphatase from Polaromonas sp. (strain JS666 / ATCC BAA-500).